We begin with the raw amino-acid sequence, 117 residues long: Antimicrobial peptide AmAMP1 (117 aa).

An N-terminal signal peptide occupies residues 1–25; the sequence is MPSIRVLFVLLAVILLFMEVKMTSA. Positions 26-73 are excised as a propeptide; sequence ASIVKDVDEDETLENEDGEAMENSWPWHGVEDTSDYSDLSDLANSEKR. Disulfide bonds link Cys-76–Cys-115, Cys-85–Cys-108, and Cys-94–Cys-112.

It belongs to the coral AMP family.

The protein resides in the secreted. Functionally, coral peptide that probably acts as an antimicrobial peptide in the surface mucous layer of planula larvae and likely also in adults. Shows moderate to high activity against some Gram-negative and Gram-positive bacteria (tested on E.coli, B.megaterium, S.aureus, E.aesturaii, B.algicola, Acinetobacter spec.). Does not show antibacterial activity against the coral pathogen V.coralliilyticus. The sequence is that of Antimicrobial peptide AmAMP1 from Acropora millepora (Staghorn coral).